The sequence spans 366 residues: DENN domain-containing protein 10 (366 aa).

A uDENN domain is found at 1–147; sequence MATSISLEDS…RVFNRGQFDV (147 aa). A cDENN domain is found at 169–309; sequence IKDIIQLFGE…EEITDQNVIK (141 aa). One can recognise a dDENN domain in the interval 311–366; sequence LNLKMKELLTKLESLKETNEETGKSSITLESLETRKLPNGMSTFLFNIANAEGLNG.

Belongs to the DENND10 family.

It is found in the late endosome. Functionally, guanine nucleotide exchange factor (GEF) which may be involved in the regulation of homeostasis of late endocytic pathway, including endosomal positioning, maturation and secretion. The protein is DENN domain-containing protein 10 (dennd10) of Dictyostelium discoideum (Social amoeba).